We begin with the raw amino-acid sequence, 93 residues long: UPF0521 protein B (93 aa).

The stretch at 2–58 (SLKEVITSLKNDFHSINKEIDSMKENNEKQEEKIFQEIKKLKLEMELLRKDNLSFKT) forms a coiled coil.

Belongs to the UPF0521 family.

This Dictyostelium discoideum (Social amoeba) protein is UPF0521 protein B.